We begin with the raw amino-acid sequence, 429 residues long: UDP-N-acetylglucosamine 1-carboxyvinyltransferase (429 aa).

22 to 23 lines the phosphoenolpyruvate pocket; sequence KN. UDP-N-acetyl-alpha-D-glucosamine is bound at residue Arg-102. The Proton donor role is filled by Cys-126. At Cys-126 the chain carries 2-(S-cysteinyl)pyruvic acid O-phosphothioketal. UDP-N-acetyl-alpha-D-glucosamine is bound by residues 131-135, Asp-316, and Ile-338; that span reads RPVDL.

This sequence belongs to the EPSP synthase family. MurA subfamily.

It is found in the cytoplasm. It catalyses the reaction phosphoenolpyruvate + UDP-N-acetyl-alpha-D-glucosamine = UDP-N-acetyl-3-O-(1-carboxyvinyl)-alpha-D-glucosamine + phosphate. Its pathway is cell wall biogenesis; peptidoglycan biosynthesis. In terms of biological role, cell wall formation. Adds enolpyruvyl to UDP-N-acetylglucosamine. The sequence is that of UDP-N-acetylglucosamine 1-carboxyvinyltransferase from Rhodopseudomonas palustris (strain BisA53).